Here is a 286-residue protein sequence, read N- to C-terminus: uncharacterized protein (286 aa).

The 220-residue stretch at 2–221 (VDGMKHLILK…PIYIKNLQKR (220 aa)) folds into the Radical SAM core domain. Cys-16, Cys-20, and Cys-23 together coordinate [4Fe-4S] cluster.

The protein belongs to the radical SAM superfamily. Anaerobic sulfatase-maturating enzyme family. It depends on [4Fe-4S] cluster as a cofactor.

This is an uncharacterized protein from Methanocaldococcus jannaschii (strain ATCC 43067 / DSM 2661 / JAL-1 / JCM 10045 / NBRC 100440) (Methanococcus jannaschii).